Consider the following 208-residue polypeptide: Protein GrpE (208 aa).

Positions 1 to 12 are enriched in basic and acidic residues; sequence MTNKDESVEKNT. Residues 1–59 form a disordered region; the sequence is MTNKDESVEKNTESTVEETNIKQNIDDSVEQAEESKGHLQDEAIEETSDENVIEEIDPK. Polar residues predominate over residues 13–23; that stretch reads ESTVEETNIKQ. A compositionally biased stretch (acidic residues) spans 42–55; it reads EAIEETSDENVIEE.

Belongs to the GrpE family. As to quaternary structure, homodimer.

The protein resides in the cytoplasm. Participates actively in the response to hyperosmotic and heat shock by preventing the aggregation of stress-denatured proteins, in association with DnaK and GrpE. It is the nucleotide exchange factor for DnaK and may function as a thermosensor. Unfolded proteins bind initially to DnaJ; upon interaction with the DnaJ-bound protein, DnaK hydrolyzes its bound ATP, resulting in the formation of a stable complex. GrpE releases ADP from DnaK; ATP binding to DnaK triggers the release of the substrate protein, thus completing the reaction cycle. Several rounds of ATP-dependent interactions between DnaJ, DnaK and GrpE are required for fully efficient folding. This is Protein GrpE from Staphylococcus aureus (strain Mu3 / ATCC 700698).